Consider the following 326-residue polypeptide: Beta-ketoacyl-[acyl-carrier-protein] synthase III (326 aa).

Catalysis depends on residues Cys-111 and His-252. Residues 253–257 (QANIR) form an ACP-binding region. Asn-282 is an active-site residue.

This sequence belongs to the thiolase-like superfamily. FabH family. In terms of assembly, homodimer.

The protein resides in the plastid. Its subcellular location is the chloroplast. The catalysed reaction is malonyl-[ACP] + acetyl-CoA + H(+) = 3-oxobutanoyl-[ACP] + CO2 + CoA. It participates in lipid metabolism; fatty acid biosynthesis. Catalyzes the condensation reaction of fatty acid synthesis by the addition to an acyl acceptor of two carbons from malonyl-ACP. Catalyzes the first condensation reaction which initiates fatty acid synthesis and may therefore play a role in governing the total rate of fatty acid production. Possesses both acetoacetyl-ACP synthase and acetyl transacylase activities. Its substrate specificity determines the biosynthesis of branched-chain and/or straight-chain of fatty acids. The protein is Beta-ketoacyl-[acyl-carrier-protein] synthase III of Porphyra umbilicalis (Purple laver).